The following is a 443-amino-acid chain: Multidrug resistance protein MdtA (443 aa).

The first 24 residues, methionine 1–alanine 24, serve as a signal peptide directing secretion. The span at aspartate 36 to valine 46 shows a compositional bias: polar residues. Disordered stretches follow at residues aspartate 36 to arginine 57 and threonine 398 to serine 443. Positions alanine 409–alanine 419 are enriched in basic and acidic residues. Low complexity predominate over residues serine 427 to serine 443.

The protein belongs to the membrane fusion protein (MFP) (TC 8.A.1) family. Part of a tripartite efflux system composed of MdtA, MdtB and MdtC.

The protein localises to the cell inner membrane. This chain is Multidrug resistance protein MdtA, found in Yersinia enterocolitica serotype O:8 / biotype 1B (strain NCTC 13174 / 8081).